The chain runs to 448 residues: tRNA modification GTPase MnmE (448 aa).

(6S)-5-formyl-5,6,7,8-tetrahydrofolate is bound by residues R21, E80, and K119. In terms of domain architecture, TrmE-type G spans 215-370 (GVKLAIVGRP…LSEEILKKVG (156 aa)). N225 lines the K(+) pocket. GTP-binding positions include 225 to 230 (NVGKSS), 244 to 250 (TDIAGTT), and 269 to 272 (DTAG). S229 lines the Mg(2+) pocket. K(+)-binding residues include T244, I246, and T249. T250 serves as a coordination point for Mg(2+). Residue K448 coordinates (6S)-5-formyl-5,6,7,8-tetrahydrofolate.

The protein belongs to the TRAFAC class TrmE-Era-EngA-EngB-Septin-like GTPase superfamily. TrmE GTPase family. Homodimer. Heterotetramer of two MnmE and two MnmG subunits. Requires K(+) as cofactor.

It localises to the cytoplasm. In terms of biological role, exhibits a very high intrinsic GTPase hydrolysis rate. Involved in the addition of a carboxymethylaminomethyl (cmnm) group at the wobble position (U34) of certain tRNAs, forming tRNA-cmnm(5)s(2)U34. The polypeptide is tRNA modification GTPase MnmE (Aquifex aeolicus (strain VF5)).